The primary structure comprises 506 residues: 2,3-bisphosphoglycerate-independent phosphoglycerate mutase (506 aa).

Mn(2+) contacts are provided by Asp-13 and Ser-63. Residue Ser-63 is the Phosphoserine intermediate of the active site. Substrate-binding positions include His-124, 153 to 154 (RD), Arg-183, Arg-189, 254 to 257 (RADR), and Lys-330. Mn(2+)-binding residues include Asp-396, His-400, Asp-437, His-438, and His-456.

The protein belongs to the BPG-independent phosphoglycerate mutase family. Monomer. The cofactor is Mn(2+).

The enzyme catalyses (2R)-2-phosphoglycerate = (2R)-3-phosphoglycerate. Its pathway is carbohydrate degradation; glycolysis; pyruvate from D-glyceraldehyde 3-phosphate: step 3/5. Its function is as follows. Catalyzes the interconversion of 2-phosphoglycerate and 3-phosphoglycerate. The protein is 2,3-bisphosphoglycerate-independent phosphoglycerate mutase of Cereibacter sphaeroides (strain ATCC 17029 / ATH 2.4.9) (Rhodobacter sphaeroides).